The chain runs to 496 residues: Ankyrin repeat domain-containing protein 34A (496 aa).

4 ANK repeats span residues 4–33, 37–72, 76–106, and 110–139; these read TEGH…YVNE, QGET…DPNI, LGRT…DPSV, and AGAS…AKGT. The residue at position 15 (glutamine 15) is an N5-methylglutamine. Composition is skewed to polar residues over residues 147-162 and 180-191; these read DTSP…YLNS and FCTSPSEIQLQT. The disordered stretch occupies residues 147–473; sequence DTSPSGTKKT…TKRKLVRRHS (327 aa). Basic and acidic residues predominate over residues 204–214; the sequence is AQEEEEKRDVF. The segment covering 218–233 has biased composition (pro residues); the sequence is LPKPPDDPSPSEPLPK. Over residues 234-243 the composition is skewed to basic residues; it reads PPRHPPKPLK. At threonine 316 the chain carries Phosphothreonine. Residues 463 to 473 show a composition bias toward basic residues; it reads RTKRKLVRRHS.

The protein belongs to the ANKRD34 family. Methylated at Gln-15 by N6AMT1.

The chain is Ankyrin repeat domain-containing protein 34A (ANKRD34A) from Homo sapiens (Human).